A 127-amino-acid polypeptide reads, in one-letter code: Fumarate reductase subunit C (127 aa).

The next 3 helical transmembrane spans lie at Ala-30–Val-50, Gly-58–Gly-78, and Ile-107–Val-127.

This sequence belongs to the FrdC family. Part of an enzyme complex containing four subunits: a flavoprotein (FrdA), an iron-sulfur protein (FrdB), and two hydrophobic anchor proteins (FrdC and FrdD).

The protein resides in the cell inner membrane. Anchors the catalytic components of the fumarate reductase complex to the cell membrane, binds quinones. The sequence is that of Fumarate reductase subunit C from Vibrio atlanticus (strain LGP32) (Vibrio splendidus (strain Mel32)).